Here is a 157-residue protein sequence, read N- to C-terminus: DNA gyrase inhibitor (157 aa).

It belongs to the DNA gyrase inhibitor family. Interacts with DNA gyrase.

The protein localises to the cytoplasm. Inhibits the supercoiling activity of DNA gyrase. Acts by inhibiting DNA gyrase at an early step, prior to (or at the step of) binding of DNA by the gyrase. It protects cells against toxins that target DNA gyrase, by inhibiting activity of these toxins and reducing the formation of lethal double-strand breaks in the cell. This chain is DNA gyrase inhibitor, found in Cronobacter turicensis (strain DSM 18703 / CCUG 55852 / LMG 23827 / z3032).